A 406-amino-acid chain; its full sequence is Fosmidomycin resistance protein (406 aa).

The Periplasmic segment spans residues 1–42; the sequence is MAMSEQPQPVAGAAASTTKARTSFGILGAISLSHLLNDMIQS. Helical transmembrane passes span 43–63 and 64–84; these read LILAIYPLLQSEFSLTFMQIG and MITLTFQLASSLLQPVVGYWT. Residues 85–102 lie on the Periplasmic side of the membrane; that stretch reads DKYPMPWSLPIGMCFTLS. Residues 103-123 traverse the membrane as a helical segment; sequence GLVLLALAGSFGAVLLAAALV. Residues 124–151 are Cytoplasmic-facing; sequence GTGSSVFHPESSRVARMASGGRHGLAQS. A helical transmembrane segment spans residues 152 to 172; the sequence is IFQVGGNFGSSLGPLLAAVII. Residues 173–177 lie on the Periplasmic side of the membrane; sequence APYGK. Residues 178-198 traverse the membrane as a helical segment; the sequence is GNVAWFVLAALLAIVVLAQIS. The Cytoplasmic segment spans residues 199–225; sequence RWYSAQHRMNKGKPKATIINPLPRNKV. Residues 226 to 246 traverse the membrane as a helical segment; that stretch reads VLAVSILLILIFSKYFYMASI. Residues 247–266 are Periplasmic-facing; the sequence is SSYYTFYLMQKFGLSIQNAQ. Residues 267–287 traverse the membrane as a helical segment; the sequence is LHLFAFLFAVAAGTVIGGPVG. Residues 288 to 294 lie on the Cytoplasmic side of the membrane; the sequence is DKIGRKY. Residues 295 to 315 traverse the membrane as a helical segment; that stretch reads VIWGSILGVAPFTLILPYASL. At 316 to 319 the chain is on the periplasmic side; sequence HWTG. A helical transmembrane segment spans residues 320–340; sequence VLTVIIGFILASAFSAILVYA. At 341 to 353 the chain is on the cytoplasmic side; sequence QELLPGRIGMVSG. The helical transmembrane segment at 354–374 threads the bilayer; it reads LFFGFAFGMGGLGAAVLGLIA. At 375-378 the chain is on the periplasmic side; that stretch reads DHTS. The helical transmembrane segment at 379–399 threads the bilayer; the sequence is IELVYKICAFLPLLGMLTIFL. At 400–406 the chain is on the cytoplasmic side; the sequence is PDNRHKD.

It belongs to the major facilitator superfamily.

The protein localises to the cell inner membrane. Confers the resistance against fosmidomycin. In Escherichia coli (strain K12), this protein is Fosmidomycin resistance protein (fsr).